The chain runs to 86 residues: MKSIVFVALFGLALLAVVCSASEDAHKELLKEVVRAVVVDKTDAVQAEERECRWYLGGCSQDGDCCKHLQCHSNYEWCIWDGTFSK.

Residues 1–21 (MKSIVFVALFGLALLAVVCSA) form the signal peptide. A propeptide spanning residues 22–50 (SEDAHKELLKEVVRAVVVDKTDAVQAEER) is cleaved from the precursor. Disulfide bonds link Cys52-Cys66, Cys59-Cys71, and Cys65-Cys78.

It belongs to the neurotoxin 10 (Hwtx-1) family. 17 (Hntx-9) subfamily. Expressed by the venom gland.

The protein localises to the secreted. In terms of biological role, ion channel inhibitor. In Cyriopagopus hainanus (Chinese bird spider), this protein is Omega-theraphotoxin-Hhn1f 2.